A 185-amino-acid chain; its full sequence is Elongation factor P (185 aa).

The protein belongs to the elongation factor P family.

It is found in the cytoplasm. Its pathway is protein biosynthesis; polypeptide chain elongation. Functionally, involved in peptide bond synthesis. Stimulates efficient translation and peptide-bond synthesis on native or reconstituted 70S ribosomes in vitro. Probably functions indirectly by altering the affinity of the ribosome for aminoacyl-tRNA, thus increasing their reactivity as acceptors for peptidyl transferase. The chain is Elongation factor P (efp) from Synechococcus elongatus (strain ATCC 33912 / PCC 7942 / FACHB-805) (Anacystis nidulans R2).